The following is a 342-amino-acid chain: Homocysteine S-methyltransferase 4 (342 aa).

The Hcy-binding domain maps to 13 to 328 (ALRGFVREAG…ATVRAIARAV (316 aa)). Zn(2+)-binding residues include C245, C313, and C314.

In terms of assembly, monomer. The cofactor is Zn(2+).

It carries out the reaction S-methyl-L-methionine + L-homocysteine = 2 L-methionine + H(+). Its function is as follows. Catalyzes methyl transfer from S-methylmethionine (SMM) to adenosyl-L-homocysteine (AdoMet). SMM degradation (by HMT-1, HMT-2, HMT-3 and HMT-4) and biosynthesis (by MMT1) constitute the SMM cycle in plants, which is probably required to achieve short term control of AdoMet level. The polypeptide is Homocysteine S-methyltransferase 4 (HMT-4) (Zea mays (Maize)).